The chain runs to 166 residues: Photosystem I assembly protein Ycf3 (166 aa).

3 TPR repeats span residues 35–68, 72–105, and 120–153; these read AFTY…EIDP, SYIL…NPSL, and GEQA…APTN.

The protein belongs to the Ycf3 family.

It is found in the plastid. Its subcellular location is the chloroplast thylakoid membrane. Its function is as follows. Essential for the assembly of the photosystem I (PSI) complex. May act as a chaperone-like factor to guide the assembly of the PSI subunits. This Oltmannsiellopsis viridis (Marine flagellate) protein is Photosystem I assembly protein Ycf3.